A 141-amino-acid polypeptide reads, in one-letter code: ATP synthase epsilon chain (141 aa).

It belongs to the ATPase epsilon chain family. As to quaternary structure, F-type ATPases have 2 components, CF(1) - the catalytic core - and CF(0) - the membrane proton channel. CF(1) has five subunits: alpha(3), beta(3), gamma(1), delta(1), epsilon(1). CF(0) has three main subunits: a, b and c.

Its subcellular location is the cell membrane. Its function is as follows. Produces ATP from ADP in the presence of a proton gradient across the membrane. The chain is ATP synthase epsilon chain from Natranaerobius thermophilus (strain ATCC BAA-1301 / DSM 18059 / JW/NM-WN-LF).